Consider the following 280-residue polypeptide: MMDTKTKLLGLIGHPVDHSFSPIMHNTAIEDLGINYVYLAFDVSEENLKNVVSGAKALQITGFNVTIPHKINIMKYLDEIDEDAKAIGAVNTVKIENGKAIGYNTDGIGAKRTLEEKAGILIDKNILIIGSGGASRAVCFELAKDNNLTIINRNIEKAKILSEEFSKKLKKQKPINYGDLDLDIKNFDIILNTTPVGMHPNTNVDPVIPLKNIKKDAVVMDLIYNPIEPVFLKEAIKYGAKTINGLGMLVYQGAVSFEIWTGMKPDIYVMKKAINSKIRL.

Shikimate contacts are provided by residues 19–21 (SFS) and threonine 66. Lysine 70 acts as the Proton acceptor in catalysis. Residue glutamate 82 participates in NADP(+) binding. Shikimate is bound by residues asparagine 91 and aspartate 106. NADP(+)-binding positions include 130 to 134 (GSGGA) and leucine 222. Shikimate is bound at residue tyrosine 224. Glycine 245 provides a ligand contact to NADP(+).

The protein belongs to the shikimate dehydrogenase family. As to quaternary structure, homodimer.

It catalyses the reaction shikimate + NADP(+) = 3-dehydroshikimate + NADPH + H(+). It functions in the pathway metabolic intermediate biosynthesis; chorismate biosynthesis; chorismate from D-erythrose 4-phosphate and phosphoenolpyruvate: step 4/7. Functionally, involved in the biosynthesis of the chorismate, which leads to the biosynthesis of aromatic amino acids. Catalyzes the reversible NADPH linked reduction of 3-dehydroshikimate (DHSA) to yield shikimate (SA). In Methanococcus maripaludis (strain C7 / ATCC BAA-1331), this protein is Shikimate dehydrogenase (NADP(+)).